The sequence spans 249 residues: Structural protein VP10 (249 aa).

The protein resides in the virion. Forms the virion spike 'foot' and helps anchor the VP9 spike 'head' protein in the virion. The protein is Structural protein VP10 (Segment-10) of Banna virus (BAV).